We begin with the raw amino-acid sequence, 225 residues long: Methyl-CpG-binding domain-containing protein 6 (225 aa).

The tract at residues 25–92 is disordered; it reads GDGTLDSSAK…PGWRVEDKIR (68 aa). The region spanning 71 to 146 is the MBD domain; the sequence is RKRAAPGDNW…ENTYFNPDHF (76 aa).

In terms of assembly, homodimer and heterodimer with MBD5. Interacts with DDM1 via its MBD domain. Interacts with NTF2, RPS2C, HDA6 and AGO4. Expressed in rosette leaves, buds, flowers, stems, mature seeds and roots.

Its subcellular location is the nucleus. The protein resides in the chromosome. It localises to the nucleolus. Its function is as follows. Transcriptional regulator that binds CpG, CpNpN and CpNpG (N is A, T, or C) islands in promoters regardless the DNA methylation status. Plays probably a role in gene silencing. May associate with histone deacetylase proteins (HDAC). Required for nucleolar dominance that consist in the silencing of rRNA genes inherited from one progenitor in genetic hybrids. Recruited to rRNA genes in a DRM2-dependent manner. Maintains gene silencing by interacting with RNA binding proteins (e.g. NTF2, RPS2C, HDA6 and AGO4) and by regulating DNA methylation status. The chain is Methyl-CpG-binding domain-containing protein 6 from Arabidopsis thaliana (Mouse-ear cress).